Reading from the N-terminus, the 217-residue chain is Casparian strip membrane protein 6 (217 aa).

Over 1-57 (MEEAKHIEAVEAKQIEAEEAQRIKAGEAKQIEAGETSRSSRKVITFEPKLVINKGIS) the chain is Cytoplasmic. Residues 58–78 (VLGFVLRLFAVFGTIGSALAM) traverse the membrane as a helical segment. Residues 79-103 (GTTHESVVSLSQLVLLKVKYSDLPT) are Extracellular-facing. A helical membrane pass occupies residues 104-124 (LMFFVVANAIAGGYLVLSLPV). The Cytoplasmic segment spans residues 125-138 (SIFHIFSTKAKTSR). The helical transmembrane segment at 139-159 (IILLVIDTVMLALVSSGASAA) threads the bilayer. At 160–191 (TATVYLAHEGNTTANWPPICQQFDGFCERISG) the chain is on the extracellular side. N-linked (GlcNAc...) asparagine glycosylation occurs at Asn-170. Residues 192 to 212 (SLIGSFCAVILLMLIVINSAI) traverse the membrane as a helical segment. The Cytoplasmic segment spans residues 213–217 (SLSRH).

Belongs to the Casparian strip membrane proteins (CASP) family. Homodimer and heterodimers.

The protein resides in the cell membrane. In terms of biological role, regulates membrane-cell wall junctions and localized cell wall deposition. Required for establishment of the Casparian strip membrane domain (CSD) and the subsequent formation of Casparian strips, a cell wall modification of the root endodermis that determines an apoplastic barrier between the intraorganismal apoplasm and the extraorganismal apoplasm and prevents lateral diffusion. This Arabidopsis lyrata subsp. lyrata (Lyre-leaved rock-cress) protein is Casparian strip membrane protein 6.